A 232-amino-acid polypeptide reads, in one-letter code: Protein FAM228B (232 aa).

It belongs to the FAM228 family.

The chain is Protein FAM228B (Fam228b) from Mus musculus (Mouse).